A 265-amino-acid polypeptide reads, in one-letter code: uncharacterized protein (265 aa).

This is an uncharacterized protein from Mycoplasma capricolum subsp. capricolum (strain California kid / ATCC 27343 / NCTC 10154).